The sequence spans 222 residues: 7-cyano-7-deazaguanine synthase (222 aa).

8 to 18 (LSGGLDSATCL) contributes to the ATP binding site. Zn(2+) contacts are provided by Cys187, Cys197, Cys200, and Cys203.

This sequence belongs to the QueC family. Zn(2+) is required as a cofactor.

The catalysed reaction is 7-carboxy-7-deazaguanine + NH4(+) + ATP = 7-cyano-7-deazaguanine + ADP + phosphate + H2O + H(+). The protein operates within purine metabolism; 7-cyano-7-deazaguanine biosynthesis. Functionally, catalyzes the ATP-dependent conversion of 7-carboxy-7-deazaguanine (CDG) to 7-cyano-7-deazaguanine (preQ(0)). This Alcanivorax borkumensis (strain ATCC 700651 / DSM 11573 / NCIMB 13689 / SK2) protein is 7-cyano-7-deazaguanine synthase.